The primary structure comprises 310 residues: N-acetyl-gamma-glutamyl-phosphate reductase (310 aa).

Cys-117 is a catalytic residue.

This sequence belongs to the NAGSA dehydrogenase family. Type 2 subfamily.

It is found in the cytoplasm. It carries out the reaction N-acetyl-L-glutamate 5-semialdehyde + phosphate + NADP(+) = N-acetyl-L-glutamyl 5-phosphate + NADPH + H(+). Its pathway is amino-acid biosynthesis; L-arginine biosynthesis; N(2)-acetyl-L-ornithine from L-glutamate: step 3/4. In terms of biological role, catalyzes the NADPH-dependent reduction of N-acetyl-5-glutamyl phosphate to yield N-acetyl-L-glutamate 5-semialdehyde. This Sinorhizobium medicae (strain WSM419) (Ensifer medicae) protein is N-acetyl-gamma-glutamyl-phosphate reductase.